A 676-amino-acid chain; its full sequence is UvrABC system protein B (676 aa).

Positions 26 to 414 (EGLENGLAHQ…SDGEIAEQVV (389 aa)) constitute a Helicase ATP-binding domain. 39–46 (GVTGSGKT) lines the ATP pocket. Positions 92-115 (YFDYYQPEAYVPTTDTFIEKDSSV) match the Beta-hairpin motif. Positions 432-598 (QVDDLLSEIR…ALKKDVADIL (167 aa)) constitute a Helicase C-terminal domain. Residues 636-671 (EKAIQKLESKMYQHAKDLEFEQAAQVRDEIDNLRKQ) form the UVR domain.

This sequence belongs to the UvrB family. As to quaternary structure, forms a heterotetramer with UvrA during the search for lesions. Interacts with UvrC in an incision complex.

Its subcellular location is the cytoplasm. The UvrABC repair system catalyzes the recognition and processing of DNA lesions. A damage recognition complex composed of 2 UvrA and 2 UvrB subunits scans DNA for abnormalities. Upon binding of the UvrA(2)B(2) complex to a putative damaged site, the DNA wraps around one UvrB monomer. DNA wrap is dependent on ATP binding by UvrB and probably causes local melting of the DNA helix, facilitating insertion of UvrB beta-hairpin between the DNA strands. Then UvrB probes one DNA strand for the presence of a lesion. If a lesion is found the UvrA subunits dissociate and the UvrB-DNA preincision complex is formed. This complex is subsequently bound by UvrC and the second UvrB is released. If no lesion is found, the DNA wraps around the other UvrB subunit that will check the other stand for damage. This Aliivibrio fischeri (strain ATCC 700601 / ES114) (Vibrio fischeri) protein is UvrABC system protein B.